The chain runs to 221 residues: F-box protein At1g55000 (221 aa).

The 40-residue stretch at 7 to 46 (DTLIIIFQKLTVADLARASCVCKVWNSVATEDDLVVSAFT) folds into the F-box domain. The LysM domain occupies 74-118 (ISHRICRGDSVTSLAVKYAVQVMDIKRLNNMMSDHGIYSRDRLLI).

In terms of assembly, part of a SCF (ASK-cullin-F-box) protein ligase complex. Interacts with SKP1A/ASK1, SKP1B/ASK2, ASK4, ASK11 and ASK13.

Its pathway is protein modification; protein ubiquitination. Component of SCF(ASK-cullin-F-box) E3 ubiquitin ligase complexes, which may mediate the ubiquitination and subsequent proteasomal degradation of target proteins. This Arabidopsis thaliana (Mouse-ear cress) protein is F-box protein At1g55000.